The following is a 222-amino-acid chain: Myosin regulatory light chain 2 (222 aa).

A disordered region spans residues 1 to 65 (MADEKKKVKK…RGSRKSKRAG (65 aa)). N-acetylalanine is present on Ala-2. Residues 19–53 (TSETASEAASEAATPAPAATPAPAASATGSKRASG) show a composition bias toward low complexity. Phosphoserine occurs at positions 66 and 67. EF-hand domains follow at residues 75–110 (KQIA…VGKI), 147–180 (DEDE…FGDK), and 181–216 (FTMK…KGEE). Positions 88, 90, 92, and 99 each coordinate Ca(2+).

In terms of assembly, myosin is a hexamer of 2 heavy chains and 4 light chains.

This chain is Myosin regulatory light chain 2 (Mlc2), found in Drosophila melanogaster (Fruit fly).